Here is a 250-residue protein sequence, read N- to C-terminus: MAGHSKWANIKHRKGAQDAKRGKIFTRLIKEITVSARMGGGDAATNPRLRSAITAARAQNLPKDTMDKAIKRGTGELEGVNYEEVRFEGYGPGGVAIIVDCLTDNNNRTVADVRHIFNKYGGNMGTHGCVAFMFDKKGQIMFDAEGINEDAIIEAALEAGAEDVVHEGDSFEVLTDPNDFSDVLEALATAGFATPSEAEVVMRPQNLQQLDEQQASTMLKLYEKLEENEDVQNIYANFDISDEIMETLSA.

It belongs to the TACO1 family.

The protein resides in the cytoplasm. The sequence is that of Probable transcriptional regulatory protein Mmc1_0479 from Magnetococcus marinus (strain ATCC BAA-1437 / JCM 17883 / MC-1).